The following is a 204-amino-acid chain: Neurensin-2 (204 aa).

The next 2 helical transmembrane spans lie at 66–86 and 122–142; these read LSSGTLLLLLGVAALTTGYAV and LCVAAGVLLAICLFWAMIGWL. The interval 178–204 is disordered; sequence SGQSWFSPPASPFGQSSVQTIQPKRDS. Residues 190–204 show a composition bias toward polar residues; it reads FGQSSVQTIQPKRDS.

The protein belongs to the VMP family.

It localises to the membrane. In terms of biological role, may play a role in maintenance and/or transport of vesicles. The polypeptide is Neurensin-2 (NRSN2) (Homo sapiens (Human)).